The primary structure comprises 102 residues: NADH-quinone oxidoreductase subunit K (102 aa).

3 consecutive transmembrane segments (helical) span residues 5–25 (LTQY…GIIL), 30–50 (IIII…NLVA), and 62–82 (IFAL…LAIL).

Belongs to the complex I subunit 4L family. NDH-1 is composed of 14 different subunits. Subunits NuoA, H, J, K, L, M, N constitute the membrane sector of the complex.

Its subcellular location is the cell inner membrane. The enzyme catalyses a quinone + NADH + 5 H(+)(in) = a quinol + NAD(+) + 4 H(+)(out). NDH-1 shuttles electrons from NADH, via FMN and iron-sulfur (Fe-S) centers, to quinones in the respiratory chain. The immediate electron acceptor for the enzyme in this species is believed to be ubiquinone. Couples the redox reaction to proton translocation (for every two electrons transferred, four hydrogen ions are translocated across the cytoplasmic membrane), and thus conserves the redox energy in a proton gradient. This is NADH-quinone oxidoreductase subunit K from Beijerinckia indica subsp. indica (strain ATCC 9039 / DSM 1715 / NCIMB 8712).